We begin with the raw amino-acid sequence, 512 residues long: ATP synthase subunit alpha (512 aa).

Residue 169–176 (GDRQTGKT) participates in ATP binding.

It belongs to the ATPase alpha/beta chains family. As to quaternary structure, F-type ATPases have 2 components, CF(1) - the catalytic core - and CF(0) - the membrane proton channel. CF(1) has five subunits: alpha(3), beta(3), gamma(1), delta(1), epsilon(1). CF(0) has three main subunits: a(1), b(2) and c(9-12). The alpha and beta chains form an alternating ring which encloses part of the gamma chain. CF(1) is attached to CF(0) by a central stalk formed by the gamma and epsilon chains, while a peripheral stalk is formed by the delta and b chains.

The protein localises to the cell inner membrane. It catalyses the reaction ATP + H2O + 4 H(+)(in) = ADP + phosphate + 5 H(+)(out). Functionally, produces ATP from ADP in the presence of a proton gradient across the membrane. The alpha chain is a regulatory subunit. The chain is ATP synthase subunit alpha from Rickettsia bellii (strain OSU 85-389).